A 375-amino-acid chain; its full sequence is UDP-N-acetylglucosamine--N-acetylmuramyl-(pentapeptide) pyrophosphoryl-undecaprenol N-acetylglucosamine transferase (375 aa).

UDP-N-acetyl-alpha-D-glucosamine is bound by residues 13 to 15 (TGG), Asn124, Arg165, Ser193, and Gln294.

Belongs to the glycosyltransferase 28 family. MurG subfamily.

Its subcellular location is the cell inner membrane. The enzyme catalyses di-trans,octa-cis-undecaprenyl diphospho-N-acetyl-alpha-D-muramoyl-L-alanyl-D-glutamyl-meso-2,6-diaminopimeloyl-D-alanyl-D-alanine + UDP-N-acetyl-alpha-D-glucosamine = di-trans,octa-cis-undecaprenyl diphospho-[N-acetyl-alpha-D-glucosaminyl-(1-&gt;4)]-N-acetyl-alpha-D-muramoyl-L-alanyl-D-glutamyl-meso-2,6-diaminopimeloyl-D-alanyl-D-alanine + UDP + H(+). It participates in cell wall biogenesis; peptidoglycan biosynthesis. Functionally, cell wall formation. Catalyzes the transfer of a GlcNAc subunit on undecaprenyl-pyrophosphoryl-MurNAc-pentapeptide (lipid intermediate I) to form undecaprenyl-pyrophosphoryl-MurNAc-(pentapeptide)GlcNAc (lipid intermediate II). This Chelativorans sp. (strain BNC1) protein is UDP-N-acetylglucosamine--N-acetylmuramyl-(pentapeptide) pyrophosphoryl-undecaprenol N-acetylglucosamine transferase.